Consider the following 550-residue polypeptide: ATP synthase subunit alpha (550 aa).

Residue 172–179 (GDRKTGKT) participates in ATP binding. Positions 521 to 550 (EPAAEPLAGEEDRETVTRFHDDATDRPAGS) are disordered. A compositionally biased stretch (basic and acidic residues) spans 534–550 (ETVTRFHDDATDRPAGS).

It belongs to the ATPase alpha/beta chains family. F-type ATPases have 2 components, CF(1) - the catalytic core - and CF(0) - the membrane proton channel. CF(1) has five subunits: alpha(3), beta(3), gamma(1), delta(1), epsilon(1). CF(0) has three main subunits: a(1), b(2) and c(9-12). The alpha and beta chains form an alternating ring which encloses part of the gamma chain. CF(1) is attached to CF(0) by a central stalk formed by the gamma and epsilon chains, while a peripheral stalk is formed by the delta and b chains.

The protein localises to the cell membrane. It carries out the reaction ATP + H2O + 4 H(+)(in) = ADP + phosphate + 5 H(+)(out). In terms of biological role, produces ATP from ADP in the presence of a proton gradient across the membrane. The alpha chain is a regulatory subunit. The chain is ATP synthase subunit alpha from Salinispora tropica (strain ATCC BAA-916 / DSM 44818 / JCM 13857 / NBRC 105044 / CNB-440).